We begin with the raw amino-acid sequence, 1038 residues long: Protein argonaute 1D (1038 aa).

Disordered regions lie at residues 1 to 58 (MGSR…GAAP) and 110 to 134 (APHEPPANVSSPEAASPEASSPRSL). 2 stretches are compositionally biased toward gly residues: residues 18-29 (RGGGRGGGGRGR) and 43-52 (GHGGRGGAGY). Residues 115-134 (PANVSSPEAASPEASSPRSL) are compositionally biased toward low complexity. The PAZ domain occupies 380–493 (PVIDFVIQLL…LPMEVCKIVE (114 aa)). One can recognise a Piwi domain in the interval 669–990 (LLIGLLPDNN…AAFRARFYME (322 aa)). A disordered region spans residues 992–1021 (DSSDSGSMASGRGGGSSTSRSTRAAGGGAV).

The protein belongs to the argonaute family. Ago subfamily.

Its function is as follows. Probably involved in the RNA silencing pathway. May bind to short RNAs such as microRNAs (miRNAs) or short interfering RNAs (siRNAs), and represses the translation of mRNAs which are complementary to them. In Oryza sativa subsp. japonica (Rice), this protein is Protein argonaute 1D (AGO1D).